Consider the following 315-residue polypeptide: Putative pyruvate, phosphate dikinase regulatory protein (315 aa).

A disordered region spans residues 1–32; that stretch reads MGPFGARASPEAGQVVKQPLTDDPQESLAQGE. 189–196 provides a ligand contact to ADP; the sequence is GVSRTSKT.

This sequence belongs to the pyruvate, phosphate/water dikinase regulatory protein family. PDRP subfamily.

It catalyses the reaction N(tele)-phospho-L-histidyl/L-threonyl-[pyruvate, phosphate dikinase] + ADP = N(tele)-phospho-L-histidyl/O-phospho-L-threonyl-[pyruvate, phosphate dikinase] + AMP + H(+). The enzyme catalyses N(tele)-phospho-L-histidyl/O-phospho-L-threonyl-[pyruvate, phosphate dikinase] + phosphate + H(+) = N(tele)-phospho-L-histidyl/L-threonyl-[pyruvate, phosphate dikinase] + diphosphate. Bifunctional serine/threonine kinase and phosphorylase involved in the regulation of the pyruvate, phosphate dikinase (PPDK) by catalyzing its phosphorylation/dephosphorylation. The sequence is that of Putative pyruvate, phosphate dikinase regulatory protein from Caulobacter vibrioides (strain ATCC 19089 / CIP 103742 / CB 15) (Caulobacter crescentus).